A 332-amino-acid polypeptide reads, in one-letter code: DNA-directed RNA polymerase subunit alpha (332 aa).

The alpha N-terminal domain (alpha-NTD) stretch occupies residues Met1–Leu234. Positions Ala264–Gly332 are alpha C-terminal domain (alpha-CTD).

It belongs to the RNA polymerase alpha chain family. Homodimer. The RNAP catalytic core consists of 2 alpha, 1 beta, 1 beta' and 1 omega subunit. When a sigma factor is associated with the core the holoenzyme is formed, which can initiate transcription.

It catalyses the reaction RNA(n) + a ribonucleoside 5'-triphosphate = RNA(n+1) + diphosphate. Its function is as follows. DNA-dependent RNA polymerase catalyzes the transcription of DNA into RNA using the four ribonucleoside triphosphates as substrates. This is DNA-directed RNA polymerase subunit alpha from Pseudothermotoga lettingae (strain ATCC BAA-301 / DSM 14385 / NBRC 107922 / TMO) (Thermotoga lettingae).